The following is a 156-amino-acid chain: Small ribosomal subunit protein uS7 (156 aa).

The protein belongs to the universal ribosomal protein uS7 family. Part of the 30S ribosomal subunit. Contacts proteins S9 and S11.

Its function is as follows. One of the primary rRNA binding proteins, it binds directly to 16S rRNA where it nucleates assembly of the head domain of the 30S subunit. Is located at the subunit interface close to the decoding center, probably blocks exit of the E-site tRNA. The sequence is that of Small ribosomal subunit protein uS7 from Limosilactobacillus reuteri (strain DSM 20016) (Lactobacillus reuteri).